We begin with the raw amino-acid sequence, 261 residues long: Triosephosphate isomerase (261 aa).

10–12 (NWK) contacts substrate. The active-site Electrophile is the His100. The active-site Proton acceptor is the Glu172. Residues Gly178, Ser218, and 239-240 (GG) each bind substrate.

It belongs to the triosephosphate isomerase family. As to quaternary structure, homodimer.

Its subcellular location is the cytoplasm. It catalyses the reaction D-glyceraldehyde 3-phosphate = dihydroxyacetone phosphate. The protein operates within carbohydrate biosynthesis; gluconeogenesis. It functions in the pathway carbohydrate degradation; glycolysis; D-glyceraldehyde 3-phosphate from glycerone phosphate: step 1/1. Involved in the gluconeogenesis. Catalyzes stereospecifically the conversion of dihydroxyacetone phosphate (DHAP) to D-glyceraldehyde-3-phosphate (G3P). In Mycolicibacterium vanbaalenii (strain DSM 7251 / JCM 13017 / BCRC 16820 / KCTC 9966 / NRRL B-24157 / PYR-1) (Mycobacterium vanbaalenii), this protein is Triosephosphate isomerase.